A 308-amino-acid chain; its full sequence is tRNA dimethylallyltransferase (308 aa).

Gly14 to Ser21 is a binding site for ATP. Thr16–Ser21 is a substrate binding site. The segment at Asp39–Gln42 is interaction with substrate tRNA.

The protein belongs to the IPP transferase family. Monomer. Mg(2+) serves as cofactor.

The catalysed reaction is adenosine(37) in tRNA + dimethylallyl diphosphate = N(6)-dimethylallyladenosine(37) in tRNA + diphosphate. Its function is as follows. Catalyzes the transfer of a dimethylallyl group onto the adenine at position 37 in tRNAs that read codons beginning with uridine, leading to the formation of N6-(dimethylallyl)adenosine (i(6)A). This chain is tRNA dimethylallyltransferase, found in Bradyrhizobium sp. (strain ORS 278).